Here is a 250-residue protein sequence, read N- to C-terminus: NADH-quinone oxidoreductase subunit C (250 aa).

It belongs to the complex I 30 kDa subunit family. As to quaternary structure, NDH-1 is composed of 14 different subunits. Subunits NuoB, C, D, E, F, and G constitute the peripheral sector of the complex.

It is found in the cell inner membrane. The enzyme catalyses a quinone + NADH + 5 H(+)(in) = a quinol + NAD(+) + 4 H(+)(out). NDH-1 shuttles electrons from NADH, via FMN and iron-sulfur (Fe-S) centers, to quinones in the respiratory chain. The immediate electron acceptor for the enzyme in this species is believed to be ubiquinone. Couples the redox reaction to proton translocation (for every two electrons transferred, four hydrogen ions are translocated across the cytoplasmic membrane), and thus conserves the redox energy in a proton gradient. In Xanthomonas campestris pv. campestris (strain 8004), this protein is NADH-quinone oxidoreductase subunit C.